The chain runs to 335 residues: Nucleoid-associated protein YejK (335 aa).

The protein belongs to the YejK family.

The protein resides in the cytoplasm. Its subcellular location is the nucleoid. The chain is Nucleoid-associated protein YejK from Shigella sonnei (strain Ss046).